A 331-amino-acid chain; its full sequence is Undecaprenyl-phosphate 4-deoxy-4-formamido-L-arabinose transferase (331 aa).

The next 2 membrane-spanning stretches (helical) occupy residues 236–256 (LSIV…FLIL) and 270–290 (VFPL…GLGL).

The protein belongs to the glycosyltransferase 2 family.

Its subcellular location is the cell inner membrane. The catalysed reaction is UDP-4-deoxy-4-formamido-beta-L-arabinose + di-trans,octa-cis-undecaprenyl phosphate = 4-deoxy-4-formamido-alpha-L-arabinopyranosyl di-trans,octa-cis-undecaprenyl phosphate + UDP. It participates in glycolipid biosynthesis; 4-amino-4-deoxy-alpha-L-arabinose undecaprenyl phosphate biosynthesis; 4-amino-4-deoxy-alpha-L-arabinose undecaprenyl phosphate from UDP-4-deoxy-4-formamido-beta-L-arabinose and undecaprenyl phosphate: step 1/2. Its pathway is bacterial outer membrane biogenesis; lipopolysaccharide biosynthesis. Functionally, catalyzes the transfer of 4-deoxy-4-formamido-L-arabinose from UDP to undecaprenyl phosphate. The modified arabinose is attached to lipid A and is required for resistance to polymyxin and cationic antimicrobial peptides. The protein is Undecaprenyl-phosphate 4-deoxy-4-formamido-L-arabinose transferase of Shewanella sediminis (strain HAW-EB3).